A 419-amino-acid polypeptide reads, in one-letter code: Serine hydroxymethyltransferase (419 aa).

Residues L121 and G125 to L127 each bind (6S)-5,6,7,8-tetrahydrofolate. Residue K229 is modified to N6-(pyridoxal phosphate)lysine. S354–F356 lines the (6S)-5,6,7,8-tetrahydrofolate pocket.

This sequence belongs to the SHMT family. In terms of assembly, homodimer. Requires pyridoxal 5'-phosphate as cofactor.

The protein resides in the cytoplasm. It catalyses the reaction (6R)-5,10-methylene-5,6,7,8-tetrahydrofolate + glycine + H2O = (6S)-5,6,7,8-tetrahydrofolate + L-serine. Its pathway is one-carbon metabolism; tetrahydrofolate interconversion. It participates in amino-acid biosynthesis; glycine biosynthesis; glycine from L-serine: step 1/1. Catalyzes the reversible interconversion of serine and glycine with tetrahydrofolate (THF) serving as the one-carbon carrier. This reaction serves as the major source of one-carbon groups required for the biosynthesis of purines, thymidylate, methionine, and other important biomolecules. Also exhibits THF-independent aldolase activity toward beta-hydroxyamino acids, producing glycine and aldehydes, via a retro-aldol mechanism. The chain is Serine hydroxymethyltransferase from Coxiella burnetii (strain CbuK_Q154) (Coxiella burnetii (strain Q154)).